A 335-amino-acid polypeptide reads, in one-letter code: Biotin synthase (335 aa).

In terms of domain architecture, Radical SAM core spans 47–276 (FYGKKVKLNM…SKEIRISGGR (230 aa)). Residues cysteine 65, cysteine 69, and cysteine 72 each contribute to the [4Fe-4S] cluster site. [2Fe-2S] cluster is bound by residues cysteine 109, cysteine 141, cysteine 201, and arginine 271.

Belongs to the radical SAM superfamily. Biotin synthase family. In terms of assembly, homodimer. [4Fe-4S] cluster is required as a cofactor. [2Fe-2S] cluster serves as cofactor.

It carries out the reaction (4R,5S)-dethiobiotin + (sulfur carrier)-SH + 2 reduced [2Fe-2S]-[ferredoxin] + 2 S-adenosyl-L-methionine = (sulfur carrier)-H + biotin + 2 5'-deoxyadenosine + 2 L-methionine + 2 oxidized [2Fe-2S]-[ferredoxin]. It participates in cofactor biosynthesis; biotin biosynthesis; biotin from 7,8-diaminononanoate: step 2/2. Catalyzes the conversion of dethiobiotin (DTB) to biotin by the insertion of a sulfur atom into dethiobiotin via a radical-based mechanism. This chain is Biotin synthase, found in Bacillus subtilis (strain 168).